A 270-amino-acid polypeptide reads, in one-letter code: Methionine-rich protein (270 aa).

The N-terminal stretch at 1-18 (MLSLWAIGLLGLLNQVEA) is a signal peptide. Over residues 31-52 (QRSAQFSSSGWGTSPAAQNPWS) the composition is skewed to polar residues. The tract at residues 31-95 (QRSAQFSSSG…MPGSMPGAMP (65 aa)) is disordered. A compositionally biased stretch (low complexity) spans 56-95 (PMPNTNMPNMNTGSLPGSMPGAMPGSMPGAMPGSMPGAMP).

Component of the acid-soluble organic matrix of calcified layers of the shell (at protein level).

The protein localises to the secreted. This is Methionine-rich protein from Lottia gigantea (Giant owl limpet).